Consider the following 338-residue polypeptide: tRNA-specific 2-thiouridylase MnmA (338 aa).

Residues 6-13 and Met-32 each bind ATP; that span reads AMSGGVDS. Cys-92 (nucleophile) is an active-site residue. Cysteines 92 and 186 form a disulfide. Gly-116 is an ATP binding site. Residues 134–136 form an interaction with tRNA region; it reads KDQ. Cys-186 acts as the Cysteine persulfide intermediate in catalysis. The segment at 288 to 289 is interaction with tRNA; sequence RY.

The protein belongs to the MnmA/TRMU family.

It localises to the cytoplasm. The catalysed reaction is S-sulfanyl-L-cysteinyl-[protein] + uridine(34) in tRNA + AH2 + ATP = 2-thiouridine(34) in tRNA + L-cysteinyl-[protein] + A + AMP + diphosphate + H(+). Functionally, catalyzes the 2-thiolation of uridine at the wobble position (U34) of tRNA, leading to the formation of s(2)U34. The polypeptide is tRNA-specific 2-thiouridylase MnmA (Campylobacter lari (strain RM2100 / D67 / ATCC BAA-1060)).